The chain runs to 155 residues: Ribosome maturation factor RimP (155 aa).

Belongs to the RimP family.

The protein resides in the cytoplasm. Required for maturation of 30S ribosomal subunits. The chain is Ribosome maturation factor RimP from Listeria monocytogenes serotype 4a (strain HCC23).